Consider the following 138-residue polypeptide: Large ribosomal subunit protein uL16 (138 aa).

The span at 1-13 (MLQPARRKYRKEQ) shows a compositional bias: basic residues. A disordered region spans residues 1-22 (MLQPARRKYRKEQKGRNTGVAT).

It belongs to the universal ribosomal protein uL16 family. Part of the 50S ribosomal subunit.

Functionally, binds 23S rRNA and is also seen to make contacts with the A and possibly P site tRNAs. The protein is Large ribosomal subunit protein uL16 of Polaromonas sp. (strain JS666 / ATCC BAA-500).